Reading from the N-terminus, the 714-residue chain is Palmitoyltransferase ZDHHC5 (714 aa).

At 1–13 the chain is on the cytoplasmic side; it reads MPAESAKRFKPSK. A helical membrane pass occupies residues 14-34; that stretch reads YVPVSAAAIFLVGATTLFFAF. Topologically, residues 35 to 52 are extracellular; sequence TCPGLSLSVSPAVPVYNA. Residues 53 to 73 form a helical membrane-spanning segment; that stretch reads VVFLFVLANFSMATFMDPGVF. Over 74-148 the chain is Cytoplasmic; the sequence is PRAEEDEDKE…NCIGRRNYRY (75 aa). A Phosphotyrosine modification is found at tyrosine 91. The region spanning 104–154 is the DHHC domain; sequence KWCATCRFYRPPRCSHCSVCDNCVEEFDHHCPWVNNCIGRRNYRYFFLFLL. Cysteine 134 acts as the S-palmitoyl cysteine intermediate in catalysis. Residues 149-169 traverse the membrane as a helical segment; sequence FFLFLLSLTAHITGVFGFGLL. At 170–191 the chain is on the extracellular side; that stretch reads YVLYHMEELSGVRTAVTMAVMC. The chain crosses the membrane as a helical span at residues 192 to 212; that stretch reads VAGLFFIPVAGLTGFHVVLVA. Residues 213–714 lie on the Cytoplasmic side of the membrane; it reads RGRTTNEQVT…VGGTTYEISV (502 aa). At serine 247 the chain carries Phosphoserine. Residues 289 to 714 form a disordered region; the sequence is GELRRTKSKG…VGGTTYEISV (426 aa). Threonine 294 is modified (phosphothreonine). Serine 296 and serine 299 each carry phosphoserine. Threonine 303 carries the post-translational modification Phosphothreonine. Residue serine 345 is modified to Phosphoserine. Phosphothreonine is present on residues threonine 348 and threonine 350. Positions 359-373 are enriched in low complexity; the sequence is SSSSASAAMPHSSSA. Serine 380, serine 398, serine 406, and serine 409 each carry phosphoserine. The segment covering 388 to 398 has biased composition (polar residues); sequence AESSRQPSYRS. The residue at position 411 (threonine 411) is a Phosphothreonine. Residues 422–432 are compositionally biased toward low complexity; that stretch reads SSGSRSSSLKS. 3 positions are modified to phosphoserine: serine 425, serine 429, and serine 432. Position 436 is a phosphothreonine (threonine 436). Residues 445–478 show a composition bias toward polar residues; that stretch reads SIRSEGTTSTSYKSLANQTRNGSLSYDSLLTPSD. Serine 529 and serine 554 each carry phosphoserine. Omega-N-methylarginine is present on arginine 616. Position 620 is a phosphoserine (serine 620). At threonine 658 the chain carries Phosphothreonine. Residues 667-678 are compositionally biased toward polar residues; it reads TAYSKSNGQPKS. Residues 683–692 are compositionally biased toward pro residues; sequence PPGPGQPPLS. Residue serine 693 is modified to Phosphoserine. At arginine 696 the chain carries Omega-N-methylarginine.

The protein belongs to the DHHC palmitoyltransferase family. ERF2/ZDHHC9 subfamily. Post-translationally, phosphorylation regulates association with endocytic proteins and its subcellular localization. Phosphorylation by LYN during fatty acid uptake leads to inactivation of the activity. In terms of processing, autopalmitoylated. Palmitoylation of the C-terminal tail regulates stimulation-dependent plasma membrane motility.

It localises to the cell membrane. The catalysed reaction is L-cysteinyl-[protein] + hexadecanoyl-CoA = S-hexadecanoyl-L-cysteinyl-[protein] + CoA. In terms of biological role, palmitoyltransferase that catalyzes the addition of palmitate onto various protein substrates such as CTNND2, CD36, GSDMD, NLRP3, NOD1, NOD2, STAT3 and S1PR1 thus plays a role in various biological processes including cell adhesion, inflammation, fatty acid uptake, bacterial sensing or cardiac functions. Plays an important role in the regulation of synapse efficacy by mediating palmitoylation of delta-catenin/CTNND2, thereby increasing synaptic delivery and surface stabilization of alpha-amino-3-hydroxy-5-methyl-4-isoxazole propionic acid receptors (AMPARs). Under basal conditions, remains at the synaptic membrane through FYN-mediated phosphorylation that prevents association with endocytic proteins. Neuronal activity enhances the internalization and trafficking of DHHC5 from spines to dendritic shafts where it palmitoylates delta-catenin/CTNND2. Regulates cell adhesion at the plasma membrane by palmitoylating GOLGA7B and DSG2. Plays a role in innate immune response by mediating the palmitoylation of NOD1 and NOD2 and their proper recruitment to the bacterial entry site and phagosomes. Also participates in fatty acid uptake by palmitoylating CD36 and thereby targeting it to the plasma membrane. Upon binding of fatty acids to CD36, gets phosphorylated by LYN leading to inactivation and subsequent CD36 caveolar endocytosis. Controls oligodendrocyte development by catalyzing STAT3 palmitoylation. Acts as a regulator of inflammatory response by mediating palmitoylation of NLRP3 and GSDMD. Palmitoylates NLRP3 to promote inflammasome assembly and activation. Activates pyroptosis by catalyzing palmitoylation of gasdermin-D (GSDMD), thereby promoting membrane translocation and pore formation of GSDMD. This Bos taurus (Bovine) protein is Palmitoyltransferase ZDHHC5 (ZDHHC5).